Consider the following 88-residue polypeptide: DNA-directed RNA polymerase subunit omega (88 aa).

Belongs to the RNA polymerase subunit omega family. In terms of assembly, the RNAP catalytic core consists of 2 alpha, 1 beta, 1 beta' and 1 omega subunit. When a sigma factor is associated with the core the holoenzyme is formed, which can initiate transcription.

It carries out the reaction RNA(n) + a ribonucleoside 5'-triphosphate = RNA(n+1) + diphosphate. Promotes RNA polymerase assembly. Latches the N- and C-terminal regions of the beta' subunit thereby facilitating its interaction with the beta and alpha subunits. The sequence is that of DNA-directed RNA polymerase subunit omega from Haemophilus influenzae (strain PittEE).